A 382-amino-acid polypeptide reads, in one-letter code: Mannitol-1-phosphate 5-dehydrogenase (382 aa).

3-14 provides a ligand contact to NAD(+); the sequence is AVHFGAGNIGRG.

It belongs to the mannitol dehydrogenase family.

It carries out the reaction D-mannitol 1-phosphate + NAD(+) = beta-D-fructose 6-phosphate + NADH + H(+). The protein is Mannitol-1-phosphate 5-dehydrogenase of Aliivibrio salmonicida (strain LFI1238) (Vibrio salmonicida (strain LFI1238)).